The sequence spans 216 residues: Transmembrane emp24 domain-containing protein eca (216 aa).

The signal sequence occupies residues 1-20 (MRDQILSLALLLCVLHSACG). Residues 21 to 182 (LYFHISETER…FRHTSESTNS (162 aa)) lie on the Lumenal side of the membrane. The GOLD domain occupies 30–126 (RKCFIEEVPD…QLRVHLDIQV (97 aa)). Positions 134 to 164 (ANVAQKEKLTELQLRIRQLLDQVEQITKEQN) form a coiled coil. Residues 183 to 203 (RVLWWSLAQTVVLVCMGFWQM) form a helical membrane-spanning segment. The Cytoplasmic segment spans residues 204 to 216 (RHLKSFFEAKKLV). The short motif at 213-216 (KKLV) is the Prevents secretion from ER element.

This sequence belongs to the EMP24/GP25L family.

It localises to the endoplasmic reticulum membrane. Its function is as follows. Eca and bai are essential, though not redundant, for dorsoventral patterning of the embryo. Specifically required during early embryogenesis for the activity of maternal tkv, while the zygotic tkv is not affected. Involved in Golgi organization. The polypeptide is Transmembrane emp24 domain-containing protein eca (Drosophila ananassae (Fruit fly)).